The sequence spans 397 residues: CCA-adding enzyme (397 aa).

The ATP site is built by G26 and R29. CTP-binding residues include G26 and R29. The Mg(2+) site is built by D39 and D41. Positions 110, 153, 156, 159, and 162 each coordinate ATP. Residues R110, D153, R156, R159, and R162 each coordinate CTP.

This sequence belongs to the tRNA nucleotidyltransferase/poly(A) polymerase family. Bacterial CCA-adding enzyme type 3 subfamily. In terms of assembly, homodimer. The cofactor is Mg(2+).

The enzyme catalyses a tRNA precursor + 2 CTP + ATP = a tRNA with a 3' CCA end + 3 diphosphate. It carries out the reaction a tRNA with a 3' CCA end + 2 CTP + ATP = a tRNA with a 3' CCACCA end + 3 diphosphate. In terms of biological role, catalyzes the addition and repair of the essential 3'-terminal CCA sequence in tRNAs without using a nucleic acid template. Adds these three nucleotides in the order of C, C, and A to the tRNA nucleotide-73, using CTP and ATP as substrates and producing inorganic pyrophosphate. tRNA 3'-terminal CCA addition is required both for tRNA processing and repair. Also involved in tRNA surveillance by mediating tandem CCA addition to generate a CCACCA at the 3' terminus of unstable tRNAs. While stable tRNAs receive only 3'-terminal CCA, unstable tRNAs are marked with CCACCA and rapidly degraded. The protein is CCA-adding enzyme of Bacillus mycoides (strain KBAB4) (Bacillus weihenstephanensis).